The chain runs to 158 residues: Snaclec coagulation factor X-activating enzyme light chain 2 (158 aa).

The signal sequence occupies residues 1–24 (MGRFISVSFGLLVVFLSLSGTGAG). 3 disulfide bridges follow: Cys27/Cys38, Cys55/Cys152, and Cys127/Cys144. Residues 34–153 (YRYFCYRVFK…CEERYLFVCK (120 aa)) enclose the C-type lectin domain. N-linked (GlcNAc...) (complex) asparagine glycosylation occurs at Asn82.

It belongs to the snaclec family. As to quaternary structure, heterotrimer; disulfide-linked. The heterotrimer consists of 1 heavy chain (a metalloproteinase) and 2 light chains: LC1 and LC2. N-glycosylated; probably required for conformation. Removal of easily accessible sugars does not change its functional capacity, but removal of the core sugars with N-glycanase causes a virtually complete loss of enzyme activity, apparently as a result of major conformational changes in the molecule. Not O-glycosylated. As to expression, expressed by the venom gland.

It localises to the secreted. In terms of biological role, regulatory subunit of the blood coagulation factor X- and IX-activating enzyme. The enzyme activates coagulation factor X (F10) by cleaving the Arg-Ile bond and is also able to activate coagulation factor IX (F9) and protein S (PROS1) by specific cleavage of Arg-Ile and Arg-Val bonds. May serve as an exosite by which the enzyme recognizes and binds to the Gla domain of factor X (F10) and factor IX (F9) in a calcium-dependent manner. This Daboia siamensis (Eastern Russel's viper) protein is Snaclec coagulation factor X-activating enzyme light chain 2 (LC2).